The chain runs to 122 residues: Large ribosomal subunit protein uL14 (122 aa).

The protein belongs to the universal ribosomal protein uL14 family. Part of the 50S ribosomal subunit. Forms a cluster with proteins L3 and L19. In the 70S ribosome, L14 and L19 interact and together make contacts with the 16S rRNA in bridges B5 and B8.

Functionally, binds to 23S rRNA. Forms part of two intersubunit bridges in the 70S ribosome. This Orientia tsutsugamushi (strain Boryong) (Rickettsia tsutsugamushi) protein is Large ribosomal subunit protein uL14.